The following is a 626-amino-acid chain: DNA polymerase 2 (626 aa).

This sequence belongs to the DNA polymerase type-B family.

The enzyme catalyses DNA(n) + a 2'-deoxyribonucleoside 5'-triphosphate = DNA(n+1) + diphosphate. Its function is as follows. This polymerase is devoid of exonuclease activity. The sequence is that of DNA polymerase 2 (dpo2) from Saccharolobus solfataricus (strain ATCC 35092 / DSM 1617 / JCM 11322 / P2) (Sulfolobus solfataricus).